Here is a 113-residue protein sequence, read N- to C-terminus: U11-theraphotoxin-Hhn1a (113 aa).

Residues 1–21 (MNTVRVTFLLVFVLAVSLGQA) form the signal peptide. Positions 22–74 (DKDENRMEMQEKTEQGNSYLDFAENLPLQKLEELEAKLLEEDSEESRNSRQKR) are excised as a propeptide. Residues 60–69 (LEEDSEESRN) are compositionally biased toward basic and acidic residues. Residues 60–83 (LEEDSEESRNSRQKRCIGEGVPCD) form a disordered region. 3 disulfide bridges follow: Cys-75–Cys-90, Cys-82–Cys-95, and Cys-89–Cys-110.

It belongs to the neurotoxin 14 (magi-1) family. 01 (HNTX-16) subfamily. In terms of tissue distribution, expressed by the venom gland.

The protein localises to the secreted. Functionally, probable ion channel inhibitor. The protein is U11-theraphotoxin-Hhn1a of Cyriopagopus hainanus (Chinese bird spider).